The chain runs to 738 residues: MDGQDIGAGGGCPFSGANTNKGRRSNRDWWPNQLNLSILHQHQARQNPLGETFNYAEAFKSLDLDAVKKDLIALMTDSQDWWPADYGHYGGLMIRMAWHSAGTYRTADGRGGASTGTQRFAPLNSWPDNGNLDKARMLLWPIKKKYGNALSWADLMILAGNCAIESMGLKPFGFGGGRADVWEPEEDIYWGAEDEWLATSDHAQARYSGDRVLEDPLAAVQMGLIYVNPEGPDGNPDPIASGRDIRETFARMAMNDEETVALTAGGHTFGKAHGNGPVDAVGPEPEAAPIEAMGQGWLSSHKSGKGVDTITSGIEGAWTPNPIQWDMGYFDVLFGYDWELTKSPAGAWIWHAKDLKEDDHAPEVDGSGKKVPIMMTTADMAMKMDPIYGPISKRFHENPEEFAEAFKRAWFKLTHRDMGPKACYLGADVPDEDLIWQDPLPAVDHALIEEADIASLKADILASGLSVQDLVYVAWSSASTFRGSDKRGGANGARIRLAPQKDWEVNEPAKLEKVLNALEGIQSSFNAAASGGKKVSLADLIVLAGSAAVEKAAKDAGFDVTVPFTPGRTDATDEQTDVESFDVMEPQIDGFRNYAPKKFSVSTEEMLVDKAQLLTLSAPEMTVLVGGLRAIGANYGDSAHGVLTSRKGQLTNDFFVNVLDLGTKWTATDDSGEIFEGADRATGEVKWTGTRADLIFGSNSQLRALSEVYAQDDNAGKMVADFVKAWVKVMELDRFDLK.

Residues 1-13 (MDGQDIGAGGGCP) are compositionally biased toward gly residues. The disordered stretch occupies residues 1–26 (MDGQDIGAGGGCPFSGANTNKGRRSN). Residues 98–226 (WHSAGTYRTA…LAAVQMGLIY (129 aa)) constitute a cross-link (tryptophyl-tyrosyl-methioninium (Trp-Tyr) (with M-252)). Residue His99 is the Proton acceptor of the active site. Residues 226-252 (YVNPEGPDGNPDPIASGRDIRETFARM) constitute a cross-link (tryptophyl-tyrosyl-methioninium (Tyr-Met) (with W-98)). His267 serves as a coordination point for heme b.

This sequence belongs to the peroxidase family. Peroxidase/catalase subfamily. As to quaternary structure, homodimer or homotetramer. Requires heme b as cofactor. Post-translationally, formation of the three residue Trp-Tyr-Met cross-link is important for the catalase, but not the peroxidase activity of the enzyme.

It carries out the reaction H2O2 + AH2 = A + 2 H2O. It catalyses the reaction 2 H2O2 = O2 + 2 H2O. Bifunctional enzyme with both catalase and broad-spectrum peroxidase activity. The protein is Catalase-peroxidase of Ruegeria sp. (strain TM1040) (Silicibacter sp.).